The sequence spans 497 residues: Bifunctional protein GlmU (497 aa).

The tract at residues 1 to 243 is pyrophosphorylase; sequence MTSSTTSSTD…SALVAGVNDR (243 aa). UDP-N-acetyl-alpha-D-glucosamine-binding positions include 16–19, Lys30, Gln87, and 92–93; these read LAAG and GT. Position 118 (Asp118) interacts with Mg(2+). 4 residues coordinate UDP-N-acetyl-alpha-D-glucosamine: Gly153, Glu168, Asn183, and Asn241. Mg(2+) is bound at residue Asn241. Residues 244 to 264 are linker; the sequence is VQLAALGAELNRRIVTAHQRA. Residues 265–497 are N-acetyltransferase; it reads GVTVIDPGST…LGHHDDSQGS (233 aa). UDP-N-acetyl-alpha-D-glucosamine contacts are provided by Arg346 and Lys364. His376 serves as the catalytic Proton acceptor. Tyr379 and Asn390 together coordinate UDP-N-acetyl-alpha-D-glucosamine. Residues Ala393, 399–400, Ser418, and Ala436 each bind acetyl-CoA; that span reads NY. A disordered region spans residues 473–497; the sequence is ARAAERASGEAAEQALGHHDDSQGS. The segment covering 488-497 has biased composition (basic and acidic residues); sequence LGHHDDSQGS.

It in the N-terminal section; belongs to the N-acetylglucosamine-1-phosphate uridyltransferase family. The protein in the C-terminal section; belongs to the transferase hexapeptide repeat family. As to quaternary structure, homotrimer. Mg(2+) serves as cofactor.

Its subcellular location is the cytoplasm. The enzyme catalyses alpha-D-glucosamine 1-phosphate + acetyl-CoA = N-acetyl-alpha-D-glucosamine 1-phosphate + CoA + H(+). It carries out the reaction N-acetyl-alpha-D-glucosamine 1-phosphate + UTP + H(+) = UDP-N-acetyl-alpha-D-glucosamine + diphosphate. The protein operates within nucleotide-sugar biosynthesis; UDP-N-acetyl-alpha-D-glucosamine biosynthesis; N-acetyl-alpha-D-glucosamine 1-phosphate from alpha-D-glucosamine 6-phosphate (route II): step 2/2. It participates in nucleotide-sugar biosynthesis; UDP-N-acetyl-alpha-D-glucosamine biosynthesis; UDP-N-acetyl-alpha-D-glucosamine from N-acetyl-alpha-D-glucosamine 1-phosphate: step 1/1. It functions in the pathway bacterial outer membrane biogenesis; LPS lipid A biosynthesis. Its function is as follows. Catalyzes the last two sequential reactions in the de novo biosynthetic pathway for UDP-N-acetylglucosamine (UDP-GlcNAc). The C-terminal domain catalyzes the transfer of acetyl group from acetyl coenzyme A to glucosamine-1-phosphate (GlcN-1-P) to produce N-acetylglucosamine-1-phosphate (GlcNAc-1-P), which is converted into UDP-GlcNAc by the transfer of uridine 5-monophosphate (from uridine 5-triphosphate), a reaction catalyzed by the N-terminal domain. In Mycobacterium sp. (strain JLS), this protein is Bifunctional protein GlmU.